The following is a 513-amino-acid chain: V-type proton ATPase subunit B, kidney isoform (513 aa).

Arg394 lines the ATP pocket. A PDZ-binding motif is present at residues 510–513 (DTAL).

This sequence belongs to the ATPase alpha/beta chains family. V-ATPase is a heteromultimeric enzyme made up of two complexes: the ATP-hydrolytic V1 complex and the proton translocation V0 complex. The V1 complex consists of three catalytic AB heterodimers that form a heterohexamer, three peripheral stalks each consisting of EG heterodimers, one central rotor including subunits D and F, and the regulatory subunits C and H. The proton translocation complex V0 consists of the proton transport subunit a, a ring of proteolipid subunits c9c'', rotary subunit d, subunits e and f, and the accessory subunits ATP6AP1/Ac45 and ATP6AP2/PRR. Forms a complex with NHERF1 and SCL4A7. In terms of tissue distribution, kidney cortex and medulla.

Its subcellular location is the apical cell membrane. It is found in the basolateral cell membrane. Functionally, non-catalytic subunit of the V1 complex of vacuolar(H+)-ATPase (V-ATPase), a multisubunit enzyme composed of a peripheral complex (V1) that hydrolyzes ATP and a membrane integral complex (V0) that translocates protons. V-ATPase is responsible for acidifying and maintaining the pH of intracellular compartments and in some cell types, is targeted to the plasma membrane, where it is responsible for acidifying the extracellular environment. Essential for the proper assembly and activity of V-ATPase. In renal intercalated cells, mediates secretion of protons (H+) into the urine thereby ensuring correct urinary acidification. Required for optimal olfactory function by mediating the acidification of the nasal olfactory epithelium. This is V-type proton ATPase subunit B, kidney isoform (ATP6V1B1) from Bos taurus (Bovine).